The following is a 465-amino-acid chain: 3-isopropylmalate dehydratase large subunit (465 aa).

[4Fe-4S] cluster-binding residues include cysteine 347, cysteine 407, and cysteine 410.

The protein belongs to the aconitase/IPM isomerase family. LeuC type 1 subfamily. In terms of assembly, heterodimer of LeuC and LeuD. The cofactor is [4Fe-4S] cluster.

The catalysed reaction is (2R,3S)-3-isopropylmalate = (2S)-2-isopropylmalate. Its pathway is amino-acid biosynthesis; L-leucine biosynthesis; L-leucine from 3-methyl-2-oxobutanoate: step 2/4. Its function is as follows. Catalyzes the isomerization between 2-isopropylmalate and 3-isopropylmalate, via the formation of 2-isopropylmaleate. The protein is 3-isopropylmalate dehydratase large subunit of Aeromonas salmonicida (strain A449).